The sequence spans 361 residues: Peptide chain release factor 1 (361 aa).

The residue at position 235 (Gln235) is an N5-methylglutamine.

The protein belongs to the prokaryotic/mitochondrial release factor family. Post-translationally, methylated by PrmC. Methylation increases the termination efficiency of RF1.

It is found in the cytoplasm. In terms of biological role, peptide chain release factor 1 directs the termination of translation in response to the peptide chain termination codons UAG and UAA. This chain is Peptide chain release factor 1, found in Buchnera aphidicola subsp. Acyrthosiphon pisum (strain 5A).